Consider the following 288-residue polypeptide: Bifunctional protein FolD 2 (288 aa).

Residues Gly-166–Ser-168 and Ser-191 contribute to the NADP(+) site.

It belongs to the tetrahydrofolate dehydrogenase/cyclohydrolase family. In terms of assembly, homodimer.

The catalysed reaction is (6R)-5,10-methylene-5,6,7,8-tetrahydrofolate + NADP(+) = (6R)-5,10-methenyltetrahydrofolate + NADPH. It catalyses the reaction (6R)-5,10-methenyltetrahydrofolate + H2O = (6R)-10-formyltetrahydrofolate + H(+). It functions in the pathway one-carbon metabolism; tetrahydrofolate interconversion. Its function is as follows. Catalyzes the oxidation of 5,10-methylenetetrahydrofolate to 5,10-methenyltetrahydrofolate and then the hydrolysis of 5,10-methenyltetrahydrofolate to 10-formyltetrahydrofolate. This Frankia casuarinae (strain DSM 45818 / CECT 9043 / HFP020203 / CcI3) protein is Bifunctional protein FolD 2.